Here is a 373-residue protein sequence, read N- to C-terminus: MKIISEGETKLMVPEESTLSKKDTVFYNPMMETNRDISVSVVQSFLDNFNRDEFLMCDPLGGSGARGIRYANELKFNGDLKVSIGDINPSAVKMIKENLKLNELENVEVFHEDANVLLSKNFKIFNVVDLDPFGSPVPYLDSGIRASLTKGGLLCMTATDTAVLCGAYRKTCIRKYNAIPLKGDKELAVRLMIGYAVKMASKYDIGLKPIFSHVTDHYARTFMVTERGAGKADSAIENLGYIRQDSEQKSFKSFEEGYEKGYTGPFYLGEISDNDIVQNSLETAKNRNYSKRAVDILELISKESKIEQVGCFDIHELCSFIKKLVPPVNDIMKNLKENGFKVSRVHYNPYGLKTDAELSDLVVLISEYHSKKY.

Positions 2–365 (KIISEGETKL…AELSDLVVLI (364 aa)) constitute a Trm1 methyltransferase domain. Residues R35, R66, D86, D113, and A114 each contribute to the S-adenosyl-L-methionine site.

Belongs to the class I-like SAM-binding methyltransferase superfamily. Trm1 family.

It catalyses the reaction guanosine(26) in tRNA + 2 S-adenosyl-L-methionine = N(2)-dimethylguanosine(26) in tRNA + 2 S-adenosyl-L-homocysteine + 2 H(+). Functionally, dimethylates a single guanine residue at position 26 of a number of tRNAs using S-adenosyl-L-methionine as donor of the methyl groups. The chain is tRNA (guanine(26)-N(2))-dimethyltransferase from Methanococcus maripaludis (strain C6 / ATCC BAA-1332).